Consider the following 331-residue polypeptide: Probable allantoicase (331 aa).

It belongs to the allantoicase family.

The enzyme catalyses allantoate + H2O = (S)-ureidoglycolate + urea. The protein operates within nitrogen metabolism; (S)-allantoin degradation; (S)-ureidoglycolate from allantoate (aminidohydrolase route): step 1/1. The chain is Probable allantoicase from Pseudomonas syringae pv. syringae (strain B728a).